We begin with the raw amino-acid sequence, 627 residues long: Neutral endopeptidase (627 aa).

The region spanning 1–627 (MTRIQDDLFA…RAPENRLKIW (627 aa)) is the Peptidase M13 domain. His475 contacts Zn(2+). The active site involves Glu476. Zn(2+) contacts are provided by His479 and Glu535. Asp539 acts as the Proton donor in catalysis.

This sequence belongs to the peptidase M13 family. Monomer. It depends on Zn(2+) as a cofactor.

Endopeptidase with broad substrate specificity for several oligopeptides. The polypeptide is Neutral endopeptidase (pepO) (Lactococcus lactis subsp. lactis (strain IL1403) (Streptococcus lactis)).